Consider the following 100-residue polypeptide: Urease subunit gamma (100 aa).

Belongs to the urease gamma subunit family. In terms of assembly, heterotrimer of UreA (gamma), UreB (beta) and UreC (alpha) subunits. Three heterotrimers associate to form the active enzyme.

It localises to the cytoplasm. It carries out the reaction urea + 2 H2O + H(+) = hydrogencarbonate + 2 NH4(+). It participates in nitrogen metabolism; urea degradation; CO(2) and NH(3) from urea (urease route): step 1/1. The polypeptide is Urease subunit gamma (Granulibacter bethesdensis (strain ATCC BAA-1260 / CGDNIH1)).